The chain runs to 501 residues: Lysine--tRNA ligase (501 aa).

Residues Glu-402 and Glu-409 each coordinate Mg(2+).

Belongs to the class-II aminoacyl-tRNA synthetase family. In terms of assembly, homodimer. The cofactor is Mg(2+).

Its subcellular location is the cytoplasm. It catalyses the reaction tRNA(Lys) + L-lysine + ATP = L-lysyl-tRNA(Lys) + AMP + diphosphate. The chain is Lysine--tRNA ligase from Helicobacter pylori (strain P12).